The chain runs to 162 residues: 2-C-methyl-D-erythritol 2,4-cyclodiphosphate synthase (162 aa).

A divalent metal cation contacts are provided by aspartate 10 and histidine 12. 4-CDP-2-C-methyl-D-erythritol 2-phosphate is bound by residues aspartate 10–histidine 12 and histidine 36–serine 37. Residue histidine 44 coordinates a divalent metal cation. 4-CDP-2-C-methyl-D-erythritol 2-phosphate is bound by residues aspartate 58–glycine 60, phenylalanine 63–aspartate 67, and arginine 144.

Belongs to the IspF family. In terms of assembly, homotrimer. A divalent metal cation is required as a cofactor.

The catalysed reaction is 4-CDP-2-C-methyl-D-erythritol 2-phosphate = 2-C-methyl-D-erythritol 2,4-cyclic diphosphate + CMP. It participates in isoprenoid biosynthesis; isopentenyl diphosphate biosynthesis via DXP pathway; isopentenyl diphosphate from 1-deoxy-D-xylulose 5-phosphate: step 4/6. Its function is as follows. Involved in the biosynthesis of isopentenyl diphosphate (IPP) and dimethylallyl diphosphate (DMAPP), two major building blocks of isoprenoid compounds. Catalyzes the conversion of 4-diphosphocytidyl-2-C-methyl-D-erythritol 2-phosphate (CDP-ME2P) to 2-C-methyl-D-erythritol 2,4-cyclodiphosphate (ME-CPP) with a corresponding release of cytidine 5-monophosphate (CMP). The sequence is that of 2-C-methyl-D-erythritol 2,4-cyclodiphosphate synthase from Burkholderia thailandensis (strain ATCC 700388 / DSM 13276 / CCUG 48851 / CIP 106301 / E264).